Consider the following 213-residue polypeptide: Pyrrolidone-carboxylate peptidase (213 aa).

Catalysis depends on residues Glu81, Cys144, and His166.

This sequence belongs to the peptidase C15 family. As to quaternary structure, homodimer.

It localises to the cytoplasm. It carries out the reaction Release of an N-terminal pyroglutamyl group from a polypeptide, the second amino acid generally not being Pro.. Functionally, removes 5-oxoproline from various penultimate amino acid residues except L-proline. This is Pyrrolidone-carboxylate peptidase (pcp) from Pseudomonas fluorescens.